A 157-amino-acid chain; its full sequence is Small ribosomal subunit protein uS7 (157 aa).

Belongs to the universal ribosomal protein uS7 family. As to quaternary structure, part of the 30S ribosomal subunit. Contacts proteins S9 and S11.

One of the primary rRNA binding proteins, it binds directly to 16S rRNA where it nucleates assembly of the head domain of the 30S subunit. Is located at the subunit interface close to the decoding center, probably blocks exit of the E-site tRNA. The protein is Small ribosomal subunit protein uS7 of Herpetosiphon aurantiacus (strain ATCC 23779 / DSM 785 / 114-95).